Here is a 997-residue protein sequence, read N- to C-terminus: Signal peptide, CUB and EGF-like domain-containing protein 2 (997 aa).

Positions 1–28 (MGVAGCGRPREARALLLLLLLLPPLLAA) are cleaved as a signal peptide. An EGF-like 1; calcium-binding domain is found at 43–83 (DVDECAQGLDDCHADALCQNTPTSYKCSCKPGYQGEGRQCE). 8 disulfides stabilise this stretch: Cys-47–Cys-60, Cys-54–Cys-69, Cys-71–Cys-82, Cys-88–Cys-100, Cys-96–Cys-109, Cys-111–Cys-124, Cys-130–Cys-141, and Cys-137–Cys-150. In terms of domain architecture, EGF-like 2; calcium-binding spans 84 to 125 (DMDECDNTLNGGCVHDCLNIPGNYRCTCFDGFMLAHDGHNCL). An EGF-like 3; calcium-binding domain is found at 126–162 (DMDECLENNGGCQHICTNVIGSYECRCKEGFFLSDNQ). EGF-like domains lie at 175-211 (CMNKDHGCGHICKEAPRGSVACECRPGFELAKNQKDC), 215-250 (CNHGNGGCQHSCEDTAEGPECSCHPRYRLHADGRSC), and 284-319 (CAVNNGGCDRTCKDTSTGVHCSCPTGFTLQVDGKTC). The EGF-like 7; calcium-binding domain maps to 321–361 (DIDECQTRNGGCNHFCKNTVGSFDCSCKKGFKLLTDEKSCQ). 9 cysteine pairs are disulfide-bonded: Cys-325–Cys-336, Cys-332–Cys-345, Cys-347–Cys-360, Cys-366–Cys-376, Cys-372–Cys-385, Cys-387–Cys-399, Cys-405–Cys-416, Cys-412–Cys-425, and Cys-427–Cys-440. Residues 362–400 (DVDECSLERTCDHSCINHPGTFICACNPGYTLYSFTHCG) form the EGF-like 8; calcium-binding domain. Residues 401 to 441 (DTNECSVNNGGCQQVCINTVGSYECQCHPGFKLHWNKKDCV) enclose the EGF-like 9; calcium-binding domain. An N-linked (GlcNAc...) asparagine glycan is attached at Asn-657. Cys-807 and Cys-833 form a disulfide bridge. One can recognise a CUB domain in the interval 807 to 919 (CGGELGDFTG…RGFQVPYVTY (113 aa)). The interval 845–854 (ILIVVPEIFL) is interaction with the cholesterol-anchor of SHH. Cys-860 and Cys-881 are oxidised to a cystine.

In terms of assembly, interacts with SHH via the cholesterol anchor of the dually lipid-modified SHH (ShhNp). Interacts with PTCH1. Forms homooligomers and heterooligomers with SCUBE1 and SCUBE3. Interacts with VEGFR2. N-glycosylated. As to expression, expressed in adult heart, lung and testis.

It is found in the secreted. Its subcellular location is the cell surface. Its function is as follows. Lipid-binding protein required for SHH long-range signaling by binding to the dually lipid-modified SHH (ShhNp) and by promoting ShhNp mobilization, solubilization and release from the cell membrane. Acts by enhancing the proteolytic processing (shedding) of the lipid-modified N- and C- terminal of ShhNp at the cell surface. Synergizes with DISP1 to cause an increase in SHH secretion. Probable cell surface coreceptor for VEGFR2 involved in VEGFR2-mediated angiogenesis. In Mus musculus (Mouse), this protein is Signal peptide, CUB and EGF-like domain-containing protein 2.